The following is a 386-amino-acid chain: All-trans-retinol dehydrogenase [NAD(+)] ADH7 (386 aa).

Cys-59 is a binding site for Zn(2+). An NAD(+)-binding site is contributed by 60 to 64; sequence RTDDH. Zn(2+) is bound by residues His-80, Cys-110, Cys-113, Cys-116, Cys-124, and Cys-186. NAD(+) is bound by residues 211–216, Asp-235, Lys-240, 281–283, 304–306, 329–331, and Arg-381; these read GLGGVG, IGH, VGV, and CVF.

The protein belongs to the zinc-containing alcohol dehydrogenase family. Class-IV subfamily. As to quaternary structure, homodimer. Requires Zn(2+) as cofactor. Preferentially expressed in stomach.

The protein resides in the cytoplasm. The catalysed reaction is a primary alcohol + NAD(+) = an aldehyde + NADH + H(+). It catalyses the reaction 10-hydroxydecanoate + NAD(+) = 10-oxodecanoate + NADH + H(+). It carries out the reaction all-trans-retinol + NAD(+) = all-trans-retinal + NADH + H(+). The enzyme catalyses 9-cis-retinol + NAD(+) = 9-cis-retinal + NADH + H(+). The catalysed reaction is all-trans-3,4-didehydroretinol + NAD(+) = all-trans-3,4-didehydroretinal + NADH + H(+). It catalyses the reaction all-trans-4-hydroxyretinol + NAD(+) = all-trans-4-hydroxyretinal + NADH + H(+). It carries out the reaction all-trans-4-oxoretinol + NAD(+) = all-trans-4-oxoretinal + NADH + H(+). The enzyme catalyses 12-hydroxydodecanoate + NAD(+) = 12-oxododecanoate + NADH + H(+). The catalysed reaction is 16-hydroxyhexadecanoate + NAD(+) = 16-oxohexadecanoate + NADH + H(+). It catalyses the reaction hexan-1-ol + NAD(+) = hexanal + NADH + H(+). It carries out the reaction (E)-hex-2-en-1-ol + NAD(+) = (E)-hex-2-enal + NADH + H(+). The enzyme catalyses (E)-4-hydroxynon-2-en-1-ol + NAD(+) = (E)-4-hydroxynon-2-enal + NADH + H(+). Its activity is regulated as follows. Retinol oxidation is inhibited by the detergent Tween 80. Ethanol inhibits both all-trans-retinol and 9-cis-retinol oxidation. 13-cis-retinol is an effective competitive inhibitor of the 9-cis-retinol oxidation. All-trans-retinoic acid is a powerful inhibitor of all-trans-retinol oxidation. 13-cis-retinoic acid is a powerful inhibitor of all-trans-retinol oxidation. Cimetidine competitively inhibited ethanol oxidation. Its function is as follows. Catalyzes the NAD-dependent oxidation of all-trans-retinol, alcohol, and omega-hydroxy fatty acids and their derivatives. Oxidizes preferentially all trans-retinol, all-trans-4-hydroxyretinol, 9-cis-retinol, 2-hexenol, and long chain omega-hydroxy fatty acids such as juniperic acid. In vitro can also catalyze the NADH-dependent reduction of all-trans-retinal and aldehydes and their derivatives. Reduces preferentially all trans-retinal, all-trans-4-oxoretinal and hexanal. Catalyzes in the oxidative direction with higher efficiency. Therefore may participate in retinoid metabolism, fatty acid omega-oxidation, and elimination of cytotoxic aldehydes produced by lipid peroxidation. In Homo sapiens (Human), this protein is All-trans-retinol dehydrogenase [NAD(+)] ADH7.